Here is a 166-residue protein sequence, read N- to C-terminus: NAD(P)H-quinone oxidoreductase subunit I, chloroplastic (166 aa).

2 consecutive 4Fe-4S ferredoxin-type domains span residues 55-84 and 95-124; these read GRIH…VDWK and LNYS…MTEE. Cys64, Cys67, Cys70, Cys74, Cys104, Cys107, Cys110, and Cys114 together coordinate [4Fe-4S] cluster.

It belongs to the complex I 23 kDa subunit family. NDH is composed of at least 16 different subunits, 5 of which are encoded in the nucleus. Requires [4Fe-4S] cluster as cofactor.

Its subcellular location is the plastid. It is found in the chloroplast thylakoid membrane. The catalysed reaction is a plastoquinone + NADH + (n+1) H(+)(in) = a plastoquinol + NAD(+) + n H(+)(out). It carries out the reaction a plastoquinone + NADPH + (n+1) H(+)(in) = a plastoquinol + NADP(+) + n H(+)(out). In terms of biological role, NDH shuttles electrons from NAD(P)H:plastoquinone, via FMN and iron-sulfur (Fe-S) centers, to quinones in the photosynthetic chain and possibly in a chloroplast respiratory chain. The immediate electron acceptor for the enzyme in this species is believed to be plastoquinone. Couples the redox reaction to proton translocation, and thus conserves the redox energy in a proton gradient. In Chamaechaenactis scaposa (Fullstem), this protein is NAD(P)H-quinone oxidoreductase subunit I, chloroplastic.